The chain runs to 393 residues: Pyruvate dehydrogenase E1 component subunit alpha-2, mitochondrial (393 aa).

The transit peptide at 1 to 28 (MALSRLSSRSNTFLKPAITALPSSIRRH) directs the protein to the mitochondrion. The pyruvate site is built by His94, Tyr120, Arg121, Gly169, Val171, Asp200, Gly201, Ala202, Asn229, and Tyr231. Thiamine diphosphate contacts are provided by Tyr120, Arg121, Gly169, Val171, Asp200, Gly201, Ala202, and Asn229. Asp200 contacts Mg(2+). The Mg(2+) site is built by Asn229 and Tyr231. His295 is a thiamine diphosphate binding site.

In terms of assembly, tetramer of 2 alpha and 2 beta subunits. Thiamine diphosphate is required as a cofactor. The cofactor is Mg(2+).

It localises to the mitochondrion matrix. The enzyme catalyses N(6)-[(R)-lipoyl]-L-lysyl-[protein] + pyruvate + H(+) = N(6)-[(R)-S(8)-acetyldihydrolipoyl]-L-lysyl-[protein] + CO2. E1 activity is regulated by phosphorylation (inactivation) and dephosphorylation (activation) of the alpha subunit. Functionally, the pyruvate dehydrogenase complex catalyzes the overall conversion of pyruvate to acetyl-CoA and CO(2). It contains multiple copies of three enzymatic components: pyruvate dehydrogenase (E1), dihydrolipoamide acetyltransferase (E2) and lipoamide dehydrogenase (E3). The polypeptide is Pyruvate dehydrogenase E1 component subunit alpha-2, mitochondrial (IAR4) (Arabidopsis thaliana (Mouse-ear cress)).